Reading from the N-terminus, the 165-residue chain is NADH-quinone oxidoreductase subunit I (165 aa).

4Fe-4S ferredoxin-type domains are found at residues 57 to 86 and 96 to 125; these read RRYD…IESE and SRYD…ETHI. [4Fe-4S] cluster-binding residues include C66, C69, C72, C76, C105, C108, C111, and C115.

This sequence belongs to the complex I 23 kDa subunit family. NDH-1 is composed of 14 different subunits. Subunits NuoA, H, J, K, L, M, N constitute the membrane sector of the complex. The cofactor is [4Fe-4S] cluster.

The protein localises to the cell inner membrane. It catalyses the reaction a quinone + NADH + 5 H(+)(in) = a quinol + NAD(+) + 4 H(+)(out). Functionally, NDH-1 shuttles electrons from NADH, via FMN and iron-sulfur (Fe-S) centers, to quinones in the respiratory chain. The immediate electron acceptor for the enzyme in this species is believed to be ubiquinone. Couples the redox reaction to proton translocation (for every two electrons transferred, four hydrogen ions are translocated across the cytoplasmic membrane), and thus conserves the redox energy in a proton gradient. The protein is NADH-quinone oxidoreductase subunit I of Polaromonas sp. (strain JS666 / ATCC BAA-500).